Consider the following 369-residue polypeptide: Protein VP6 (369 aa).

Residues 20-208 (LEQRSIAPLL…EEAKVGGGDR (189 aa)) are disordered. A compositionally biased stretch (basic and acidic residues) spans 29 to 66 (LREKNSTEAKSKLKEDGEKKNKSEKEENKIHDDRRVES). Composition is skewed to gly residues over residues 92–111 (TGGGDGGAGARTGIGGGGVG) and 162–171 (TSGGLQGRGG). A compositionally biased stretch (basic and acidic residues) spans 196–208 (TEGEEAKVGGGDR).

This sequence belongs to the orbivirus VP6 family.

It localises to the virion. This chain is Protein VP6 (S9), found in African horse sickness virus 3 (AHSV-3).